The sequence spans 331 residues: Ketol-acid reductoisomerase (NADP(+)) (331 aa).

The KARI N-terminal Rossmann domain occupies 2-181 (IKKYYESDAD…GATRAVVFET (180 aa)). NADP(+) is bound by residues 25–28 (YGSQ), Arg48, Ser52, and 82–85 (DESQ). His107 is an active-site residue. Gly133 serves as a coordination point for NADP(+). One can recognise a KARI C-terminal knotted domain in the interval 182-327 (TFREETETDL…AEIRGLMPQF (146 aa)). Mg(2+) is bound by residues Asp190, Glu194, Glu226, and Glu230. Ser251 provides a ligand contact to substrate.

Belongs to the ketol-acid reductoisomerase family. It depends on Mg(2+) as a cofactor.

The enzyme catalyses (2R)-2,3-dihydroxy-3-methylbutanoate + NADP(+) = (2S)-2-acetolactate + NADPH + H(+). The catalysed reaction is (2R,3R)-2,3-dihydroxy-3-methylpentanoate + NADP(+) = (S)-2-ethyl-2-hydroxy-3-oxobutanoate + NADPH + H(+). The protein operates within amino-acid biosynthesis; L-isoleucine biosynthesis; L-isoleucine from 2-oxobutanoate: step 2/4. Its pathway is amino-acid biosynthesis; L-valine biosynthesis; L-valine from pyruvate: step 2/4. Its function is as follows. Involved in the biosynthesis of branched-chain amino acids (BCAA). Catalyzes an alkyl-migration followed by a ketol-acid reduction of (S)-2-acetolactate (S2AL) to yield (R)-2,3-dihydroxy-isovalerate. In the isomerase reaction, S2AL is rearranged via a Mg-dependent methyl migration to produce 3-hydroxy-3-methyl-2-ketobutyrate (HMKB). In the reductase reaction, this 2-ketoacid undergoes a metal-dependent reduction by NADPH to yield (R)-2,3-dihydroxy-isovalerate. This is Ketol-acid reductoisomerase (NADP(+)) from Methanosphaerula palustris (strain ATCC BAA-1556 / DSM 19958 / E1-9c).